We begin with the raw amino-acid sequence, 128 residues long: Azurin (128 aa).

One can recognise a Plastocyanin-like domain in the interval 1–128; sequence ACDVSIEGND…IMKGTIELGS (128 aa). A disulfide bridge links Cys2 with Cys25. Residues His45, Cys111, His116, and Met120 each contribute to the Cu cation site.

Monomer. Interacts with the AAUA/AAUB heterotetramer complex. The cofactor is Cu cation.

The protein resides in the periplasm. Functionally, transfers electrons from cytochrome c551 to cytochrome oxidase. Transfers electrons from the tryptophan tryptophylquinone of the aromatic amine dehydrogenase heterotetramer. The sequence is that of Azurin from Alcaligenes faecalis.